The primary structure comprises 234 residues: Zinc finger FYVE domain-containing protein 21 (234 aa).

The segment at 44–104 (DKECPRCMQC…QCADCALVSH (61 aa)) adopts an FYVE-type zinc-finger fold. 8 residues coordinate Zn(2+): cysteine 50, cysteine 53, cysteine 66, cysteine 69, cysteine 74, cysteine 77, cysteine 96, and cysteine 99. Residues 107–234 (AEFYDKQLKV…TKLLYESRDQ (128 aa)) are PH-like.

As to quaternary structure, interacts with PTK2/FAK1.

Its subcellular location is the cell junction. It localises to the focal adhesion. It is found in the cytoplasmic vesicle. The protein resides in the endosome. Functionally, plays a role in cell adhesion, and thereby in cell motility which requires repeated formation and disassembly of focal adhesions. Regulates microtubule-induced PTK2/FAK1 dephosphorylation, an event important for focal adhesion disassembly, as well as integrin beta-1/ITGB1 cell surface expression. The chain is Zinc finger FYVE domain-containing protein 21 (Zfyve21) from Rattus norvegicus (Rat).